Consider the following 518-residue polypeptide: Glutamate--cysteine ligase (518 aa).

It belongs to the glutamate--cysteine ligase type 1 family. Type 1 subfamily.

It catalyses the reaction L-cysteine + L-glutamate + ATP = gamma-L-glutamyl-L-cysteine + ADP + phosphate + H(+). It functions in the pathway sulfur metabolism; glutathione biosynthesis; glutathione from L-cysteine and L-glutamate: step 1/2. The protein is Glutamate--cysteine ligase of Shigella dysenteriae serotype 1 (strain Sd197).